The primary structure comprises 509 residues: Glutamate--tRNA ligase (509 aa).

A 'HIGH' region motif is present at residues proline 20–threonine 30. Positions 117, 119, 144, and 146 each coordinate Zn(2+). The 'KMSKS' region signature appears at lysine 261–arginine 265. Lysine 264 lines the ATP pocket.

The protein belongs to the class-I aminoacyl-tRNA synthetase family. Glutamate--tRNA ligase type 1 subfamily. In terms of assembly, monomer. It depends on Zn(2+) as a cofactor.

The protein resides in the cytoplasm. The enzyme catalyses tRNA(Glu) + L-glutamate + ATP = L-glutamyl-tRNA(Glu) + AMP + diphosphate. In terms of biological role, catalyzes the attachment of glutamate to tRNA(Glu) in a two-step reaction: glutamate is first activated by ATP to form Glu-AMP and then transferred to the acceptor end of tRNA(Glu). The chain is Glutamate--tRNA ligase from Psychrobacter cryohalolentis (strain ATCC BAA-1226 / DSM 17306 / VKM B-2378 / K5).